The primary structure comprises 165 residues: Large ribosomal subunit protein uL10 (165 aa).

It belongs to the universal ribosomal protein uL10 family. In terms of assembly, part of the ribosomal stalk of the 50S ribosomal subunit. The N-terminus interacts with L11 and the large rRNA to form the base of the stalk. The C-terminus forms an elongated spine to which L12 dimers bind in a sequential fashion forming a multimeric L10(L12)X complex.

In terms of biological role, forms part of the ribosomal stalk, playing a central role in the interaction of the ribosome with GTP-bound translation factors. The polypeptide is Large ribosomal subunit protein uL10 (Deinococcus deserti (strain DSM 17065 / CIP 109153 / LMG 22923 / VCD115)).